The primary structure comprises 476 residues: Ribulose bisphosphate carboxylase large chain (476 aa).

Positions 1-2 (MS) are excised as a propeptide. Residue P3 is modified to N-acetylproline. K14 carries the post-translational modification N6,N6,N6-trimethyllysine. The substrate site is built by N123 and T173. K175 functions as the Proton acceptor in the catalytic mechanism. K177 lines the substrate pocket. K201, D203, and E204 together coordinate Mg(2+). The residue at position 201 (K201) is an N6-carboxylysine. The active-site Proton acceptor is H294. Substrate is bound by residues R295, H327, and S379.

The protein belongs to the RuBisCO large chain family. Type I subfamily. In terms of assembly, heterohexadecamer of 8 large chains and 8 small chains; disulfide-linked. The disulfide link is formed within the large subunit homodimers. Mg(2+) is required as a cofactor. Post-translationally, the disulfide bond which can form in the large chain dimeric partners within the hexadecamer appears to be associated with oxidative stress and protein turnover.

Its subcellular location is the plastid. The protein resides in the chloroplast. The enzyme catalyses 2 (2R)-3-phosphoglycerate + 2 H(+) = D-ribulose 1,5-bisphosphate + CO2 + H2O. It carries out the reaction D-ribulose 1,5-bisphosphate + O2 = 2-phosphoglycolate + (2R)-3-phosphoglycerate + 2 H(+). Its function is as follows. RuBisCO catalyzes two reactions: the carboxylation of D-ribulose 1,5-bisphosphate, the primary event in carbon dioxide fixation, as well as the oxidative fragmentation of the pentose substrate in the photorespiration process. Both reactions occur simultaneously and in competition at the same active site. In Brachypodium distachyon (Purple false brome), this protein is Ribulose bisphosphate carboxylase large chain.